The following is a 379-amino-acid chain: Beta sliding clamp (379 aa).

The protein belongs to the beta sliding clamp family. In terms of assembly, forms a ring-shaped head-to-tail homodimer around DNA which binds and tethers DNA polymerases and other proteins to the DNA. The DNA replisome complex has a single clamp-loading complex (3 tau and 1 each of delta, delta', psi and chi subunits) which binds 3 Pol III cores (1 core on the leading strand and 2 on the lagging strand) each with a beta sliding clamp dimer. Additional proteins in the replisome are other copies of gamma, psi and chi, Ssb, DNA helicase and RNA primase.

The protein resides in the cytoplasm. Its function is as follows. Confers DNA tethering and processivity to DNA polymerases and other proteins. Acts as a clamp, forming a ring around DNA (a reaction catalyzed by the clamp-loading complex) which diffuses in an ATP-independent manner freely and bidirectionally along dsDNA. Initially characterized for its ability to contact the catalytic subunit of DNA polymerase III (Pol III), a complex, multichain enzyme responsible for most of the replicative synthesis in bacteria; Pol III exhibits 3'-5' exonuclease proofreading activity. The beta chain is required for initiation of replication as well as for processivity of DNA replication. This chain is Beta sliding clamp (dnaN), found in Rickettsia bellii (strain RML369-C).